A 278-amino-acid polypeptide reads, in one-letter code: TIMELESS-interacting protein (278 aa).

The interval 1–59 (MLEQEENGLFEIPDYEHVEDETFPPFPPPASPERDPADAEPEEGSGSGVPVPPKRTVKR) is disordered. The segment at 64–140 (LDATRLTSER…KEVQTCLKRI (77 aa)) is interaction with TIMELESS. 2 disordered regions span residues 155 to 197 (NDEV…EEQQ) and 216 to 278 (LSNS…TNLD). Residues serine 191 and serine 219 each carry the phosphoserine modification. Positions 226–239 (VTVEENSTGEDQEE) are enriched in acidic residues. Threonine 233 bears the Phosphothreonine mark. A compositionally biased stretch (basic and acidic residues) spans 259 to 278 (THEEEQCKAEETQLDHTNLD).

Belongs to the CSM3 family. As to quaternary structure, interacts with MCM6 and MCM7. Interacts with TIMELESS (via N-terminus), which impairs TIMELESS self-association. Interacts with RPA2 and PRDX2. In terms of tissue distribution, expressed in brain.

The protein localises to the cytoplasm. The protein resides in the nucleus. Functionally, plays an important role in the control of DNA replication and the maintenance of replication fork stability. Important for cell survival after DNA damage or replication stress. May be specifically required for the ATR-CHEK1 pathway in the replication checkpoint induced by hydroxyurea or ultraviolet light. Forms a complex with TIMELESS and this complex regulates DNA replication processes under both normal and stress conditions, stabilizes replication forks and influences both CHEK1 phosphorylation and the intra-S phase checkpoint in response to genotoxic stress. The polypeptide is TIMELESS-interacting protein (Tipin) (Mus musculus (Mouse)).